Consider the following 122-residue polypeptide: Large ribosomal subunit protein uL14c (122 aa).

Belongs to the universal ribosomal protein uL14 family. In terms of assembly, part of the 50S ribosomal subunit.

It is found in the plastid. The protein localises to the chloroplast. Functionally, binds to 23S rRNA. In Pinus koraiensis (Korean pine), this protein is Large ribosomal subunit protein uL14c.